A 449-amino-acid chain; its full sequence is Methionine aminopeptidase 2 (449 aa).

The tract at residues M1–P91 is disordered. A compositionally biased stretch (acidic residues) spans E34 to Q50. Residues K61–A75 show a composition bias toward basic residues. H199 contributes to the substrate binding site. A divalent metal cation-binding residues include D219, D230, and H299. H307 is a substrate binding site. A divalent metal cation-binding residues include E335 and E430.

The protein belongs to the peptidase M24A family. Methionine aminopeptidase eukaryotic type 2 subfamily. Co(2+) serves as cofactor. The cofactor is Zn(2+). It depends on Mn(2+) as a cofactor. Requires Fe(2+) as cofactor.

Its subcellular location is the cytoplasm. It carries out the reaction Release of N-terminal amino acids, preferentially methionine, from peptides and arylamides.. In terms of biological role, cotranslationally removes the N-terminal methionine from nascent proteins. The N-terminal methionine is often cleaved when the second residue in the primary sequence is small and uncharged (Met-Ala-, Cys, Gly, Pro, Ser, Thr, or Val). This chain is Methionine aminopeptidase 2, found in Trichophyton verrucosum (strain HKI 0517).